A 303-amino-acid chain; its full sequence is Recombination-associated protein RdgC (303 aa).

It belongs to the RdgC family.

The protein resides in the cytoplasm. It is found in the nucleoid. Its function is as follows. May be involved in recombination. The protein is Recombination-associated protein RdgC of Edwardsiella ictaluri (strain 93-146).